We begin with the raw amino-acid sequence, 1112 residues long: Plasma membrane calcium-transporting ATPase 2 (1112 aa).

The Cytoplasmic portion of the chain corresponds to Met-1 to Thr-94. Residues Phe-95–Ala-115 form a helical membrane-spanning segment. Residues Leu-116–Trp-152 are Extracellular-facing. The chain crosses the membrane as a helical span at residues Ile-153–Asp-173. The Cytoplasmic segment spans residues Trp-174–Leu-373. Residues Glu-298–His-311 are compositionally biased toward basic and acidic residues. Positions Glu-298–Lys-363 are disordered. Polar residues predominate over residues Gln-312–Ile-327. The segment covering Ala-351–Lys-363 has biased composition (basic and acidic residues). Residues Thr-374 to Ile-393 traverse the membrane as a helical segment. At Ile-394–Phe-426 the chain is on the extracellular side. A helical membrane pass occupies residues Phe-427–Leu-444. Residues Ala-445 to Ile-858 lie on the Cytoplasmic side of the membrane. Asp-482 functions as the 4-aspartylphosphate intermediate in the catalytic mechanism. Mg(2+) contacts are provided by Asp-803 and Asp-807. The helical transmembrane segment at Ser-859–Thr-878 threads the bilayer. Residues Gly-879–Leu-888 lie on the Extracellular side of the membrane. The chain crosses the membrane as a helical span at residues Lys-889–Ala-909. Over Thr-910–Leu-929 the chain is Cytoplasmic. The chain crosses the membrane as a helical span at residues Ile-930–Leu-952. Over Leu-953–Leu-970 the chain is Extracellular. A helical transmembrane segment spans residues His-971–Asn-992. Topologically, residues Glu-993 to Arg-1011 are cytoplasmic. The chain crosses the membrane as a helical span at residues Asn-1012–Gly-1033. Over Gly-1034–Asp-1043 the chain is Extracellular. The chain crosses the membrane as a helical span at residues Leu-1044–Ala-1065. The Cytoplasmic portion of the chain corresponds to Thr-1066–Leu-1112. The tract at residues Glu-1086 to Leu-1112 is disordered. The span at Leu-1087 to Glu-1098 shows a compositional bias: acidic residues. A compositionally biased stretch (basic and acidic residues) spans Ile-1099–Leu-1112. Positions Leu-1106 to Leu-1112 are calmodulin-binding subdomain A.

The protein belongs to the cation transport ATPase (P-type) (TC 3.A.3) family. Type IIB subfamily.

It localises to the cell membrane. It carries out the reaction Ca(2+)(in) + ATP + H2O = Ca(2+)(out) + ADP + phosphate + H(+). This magnesium-dependent enzyme catalyzes the hydrolysis of ATP coupled with the transport of calcium out of the cell. The protein is Plasma membrane calcium-transporting ATPase 2 (atp2b2) of Oreochromis mossambicus (Mozambique tilapia).